The sequence spans 102 residues: Putative RNA-binding protein RbpA (102 aa).

An RRM domain is found at 2–79; it reads SIYVGNLSYE…RDLKVNKAKP (78 aa). A compositionally biased stretch (basic and acidic residues) spans 73-84; that stretch reads KVNKAKPREDRG. The segment at 73-102 is disordered; sequence KVNKAKPREDRGPSGGNRGGYGGGGGRNRY. Positions 85–102 are enriched in gly residues; it reads PSGGNRGGYGGGGGRNRY.

This Nostoc sp. (strain PCC 7120 / SAG 25.82 / UTEX 2576) protein is Putative RNA-binding protein RbpA (rbpA).